The chain runs to 82 residues: RNA-binding protein Hfq (82 aa).

The Sm domain occupies 11-71; the sequence is DTFLNHVRKT…ISTIMPGAPI (61 aa).

It belongs to the Hfq family. In terms of assembly, homohexamer.

In terms of biological role, RNA chaperone that binds small regulatory RNA (sRNAs) and mRNAs to facilitate mRNA translational regulation in response to envelope stress, environmental stress and changes in metabolite concentrations. Also binds with high specificity to tRNAs. The protein is RNA-binding protein Hfq of Rhodopseudomonas palustris (strain HaA2).